The primary structure comprises 657 residues: Glycogen debranching enzyme (657 aa).

Aspartate 336 functions as the Nucleophile in the catalytic mechanism. Glutamate 371 functions as the Proton donor in the catalytic mechanism. Positions 458-467 (NEANGEENRD) are enriched in basic and acidic residues. Residues 458 to 479 (NEANGEENRDGTNNNYSNNHGK) are disordered.

It belongs to the glycosyl hydrolase 13 family.

The catalysed reaction is Hydrolysis of (1-&gt;6)-alpha-D-glucosidic linkages to branches with degrees of polymerization of three or four glucose residues in limit dextrin.. It functions in the pathway glycan degradation; glycogen degradation. Its function is as follows. Removes maltotriose and maltotetraose chains that are attached by 1,6-alpha-linkage to the limit dextrin main chain, generating a debranched limit dextrin. This is Glycogen debranching enzyme from Escherichia coli O139:H28 (strain E24377A / ETEC).